The following is a 1219-amino-acid chain: DNA ligase 4 (1219 aa).

ATP is bound by residues glutamate 251, lysine 253, arginine 258, arginine 273, glutamate 303, phenylalanine 342, glutamate 418, lysine 423, arginine 434, lysine 440, and lysine 442. The N6-AMP-lysine intermediate role is filled by lysine 253. Mg(2+) is bound at residue glutamate 303. Mg(2+) is bound at residue glutamate 418. The interval 604–632 is disordered; the sequence is NGTTQKQKESESTQDNPKVNKSSKRGEKK. 2 BRCT domains span residues 651–739 and 807–909; these read GKTS…PKYF and VYFY…VYTL. Disordered regions lie at residues 914 to 1126 and 1146 to 1197; these read MEES…MDMK and IPSQ…SDVV. Over residues 932 to 960 the composition is skewed to polar residues; it reads VASQGSAQTKEPASSKIAITSSRGRSNTR. A compositionally biased stretch (basic residues) spans 1042-1051; sequence QRSRRGKKAA. Over residues 1056 to 1065 the composition is skewed to acidic residues; sequence DESDENDELD. Composition is skewed to basic and acidic residues over residues 1084–1096 and 1117–1126; these read VENE…DIAK and RNAKTEMDMK. A compositionally biased stretch (polar residues) spans 1148–1159; sequence SQKTTETSNRTT.

This sequence belongs to the ATP-dependent DNA ligase family. Interacts with XRCC4 via its tandem BRCT domains. Interacts with POLL. Mg(2+) serves as cofactor. In terms of tissue distribution, widely expressed, with higher levels in young flowers and roots.

It localises to the nucleus. The enzyme catalyses ATP + (deoxyribonucleotide)n-3'-hydroxyl + 5'-phospho-(deoxyribonucleotide)m = (deoxyribonucleotide)n+m + AMP + diphosphate.. DNA ligase involved in DNA non-homologous end joining (NHEJ); required for double-strand break (DSB) repair. May be involved for T-DNA integration even if not absolutely required. Seems to be dispensable under normal growth conditions. The sequence is that of DNA ligase 4 (LIG4) from Arabidopsis thaliana (Mouse-ear cress).